A 365-amino-acid polypeptide reads, in one-letter code: 3-isopropylmalate dehydrogenase (365 aa).

Substrate-binding residues include Arg-96, Arg-106, Arg-134, and Asp-224. Residues Asp-224, Asp-248, and Asp-252 each contribute to the Mg(2+) site. 288 to 300 (GSAPTIAKQNIAN) contributes to the NAD(+) binding site.

The protein belongs to the isocitrate and isopropylmalate dehydrogenases family. LeuB type 1 subfamily. In terms of assembly, homodimer. Requires Mg(2+) as cofactor. The cofactor is Mn(2+).

The protein localises to the cytoplasm. It catalyses the reaction (2R,3S)-3-isopropylmalate + NAD(+) = 4-methyl-2-oxopentanoate + CO2 + NADH. Its pathway is amino-acid biosynthesis; L-leucine biosynthesis; L-leucine from 3-methyl-2-oxobutanoate: step 3/4. Functionally, catalyzes the oxidation of 3-carboxy-2-hydroxy-4-methylpentanoate (3-isopropylmalate) to 3-carboxy-4-methyl-2-oxopentanoate. The product decarboxylates to 4-methyl-2 oxopentanoate. The polypeptide is 3-isopropylmalate dehydrogenase (Dehalococcoides mccartyi (strain CBDB1)).